The chain runs to 128 residues: Probable 4-amino-4-deoxy-L-arabinose-phosphoundecaprenol flippase subunit ArnF (128 aa).

Topologically, residues 1 to 2 (MG) are cytoplasmic. The chain crosses the membrane as a helical span at residues 3–23 (LIWGLFSVIIASVAQLSLGFA). Topologically, residues 24-35 (ASHLPPMTHLWD) are periplasmic. A helical membrane pass occupies residues 36–56 (FIAALLAFGLDARILLLGLLG). The Cytoplasmic portion of the chain corresponds to 57–75 (YLLSVFCWYKTLHKLALSK). The helical transmembrane segment at 76–96 (AYALLSMSYVLVWIASMVLPG) threads the bilayer. Topologically, residues 97 to 100 (REGT) are periplasmic. Residues 101-121 (FSLKALLGVACIMSGLMLIFL) form a helical membrane-spanning segment. Residues 122–128 (PTTKQRY) are Cytoplasmic-facing.

This sequence belongs to the ArnF family. In terms of assembly, heterodimer of ArnE and ArnF.

The protein localises to the cell inner membrane. It functions in the pathway bacterial outer membrane biogenesis; lipopolysaccharide biosynthesis. In terms of biological role, translocates 4-amino-4-deoxy-L-arabinose-phosphoundecaprenol (alpha-L-Ara4N-phosphoundecaprenol) from the cytoplasmic to the periplasmic side of the inner membrane. The protein is Probable 4-amino-4-deoxy-L-arabinose-phosphoundecaprenol flippase subunit ArnF of Shigella flexneri serotype 5b (strain 8401).